The sequence spans 250 residues: MPAERSPIDTAKFAAARRAVDFVQDGMKLGLGTGSTAAWMVRCLAERVREEGLRVQGVPTSSRTAELARELGIPVVTLDEARWLDLTIDGADEFDSEFNLIKGGGAALLQEKIVATASDRMIVIADAAKEVAQLGAFPLPVEVIPFGWQSTRMLIEEALIGLDVLGREVTLRRSGEAPLLTDEKNYILDLHLTRIGHPRQLALTLNQIAGVVENGLFIDICDTVVVGHGDGRVTVRDLGASRNIFADLGE.

Substrate-binding positions include 33-36, 89-92, and 102-105; these read TGST, DGAD, and KGGG. Glutamate 111 serves as the catalytic Proton acceptor. Lysine 129 is a binding site for substrate.

The protein belongs to the ribose 5-phosphate isomerase family. As to quaternary structure, homodimer.

The catalysed reaction is aldehydo-D-ribose 5-phosphate = D-ribulose 5-phosphate. Its pathway is carbohydrate degradation; pentose phosphate pathway; D-ribose 5-phosphate from D-ribulose 5-phosphate (non-oxidative stage): step 1/1. Its function is as follows. Catalyzes the reversible conversion of ribose-5-phosphate to ribulose 5-phosphate. The chain is Ribose-5-phosphate isomerase A from Cereibacter sphaeroides (strain ATCC 17025 / ATH 2.4.3) (Rhodobacter sphaeroides).